The sequence spans 74 residues: Putative defensin-like protein 186 (74 aa).

A signal peptide spans 1 to 22 (MKNSSIILVLVFFFFISSSGEA). Intrachain disulfides connect Cys-25/Cys-74, Cys-31/Cys-51, Cys-37/Cys-68, and Cys-41/Cys-70.

Belongs to the DEFL family.

It localises to the secreted. The polypeptide is Putative defensin-like protein 186 (LCR40) (Arabidopsis thaliana (Mouse-ear cress)).